The following is a 306-amino-acid chain: Beta-lactamase 1 (306 aa).

Residues 1-43 (MKNKRMLKIGMCVGILGLSVTSLEAFTGGALQVEAKEKTGQVK) form the signal peptide. Ser-89 serves as the catalytic Acyl-ester intermediate. The active-site Proton acceptor is the Glu-185. A substrate-binding site is contributed by 251–253 (KSG).

Belongs to the class-A beta-lactamase family.

It catalyses the reaction a beta-lactam + H2O = a substituted beta-amino acid. This protein is a beta-lactamase with a substrate specificity for penicillins. In Bacillus mycoides, this protein is Beta-lactamase 1 (blaCI).